Consider the following 67-residue polypeptide: Inosine/xanthosine triphosphatase (67 aa).

This sequence belongs to the YjjX NTPase family. Homodimer. Mg(2+) is required as a cofactor. The cofactor is Mn(2+).

The catalysed reaction is XTP + H2O = XDP + phosphate + H(+). The enzyme catalyses ITP + H2O = IDP + phosphate + H(+). Functionally, phosphatase that hydrolyzes non-canonical purine nucleotides such as XTP and ITP to their respective diphosphate derivatives. Probably excludes non-canonical purines from DNA/RNA precursor pool, thus preventing their incorporation into DNA/RNA and avoiding chromosomal lesions. The polypeptide is Inosine/xanthosine triphosphatase (Enterobacter cloacae).